The chain runs to 444 residues: Glutamate dehydrogenase (444 aa).

Residue K124 is part of the active site.

This sequence belongs to the Glu/Leu/Phe/Val dehydrogenases family. As to quaternary structure, homohexamer.

The enzyme catalyses L-glutamate + NAD(+) + H2O = 2-oxoglutarate + NH4(+) + NADH + H(+). It catalyses the reaction L-glutamate + NADP(+) + H2O = 2-oxoglutarate + NH4(+) + NADPH + H(+). This chain is Glutamate dehydrogenase (gdhA), found in Bacteroides thetaiotaomicron (strain ATCC 29148 / DSM 2079 / JCM 5827 / CCUG 10774 / NCTC 10582 / VPI-5482 / E50).